We begin with the raw amino-acid sequence, 125 residues long: Photoactive yellow protein (125 aa).

A PAS domain is found at 23-86 (LNQLAFGAIQ…GRFKEGVANG (64 aa)). Cys69 carries the S-(4-hydroxycinnamyl)cysteine modification.

Belongs to the photoactive yellow protein family. Post-translationally, the 4-hydroxycinnamic acid (p-coumaric acid) chromophore is covalently bound via a thioester linkage.

Functionally, photoactive blue light protein. Probably functions as a photoreceptor for a negative phototaxis response. This Halochromatium salexigens (Chromatium salexigens) protein is Photoactive yellow protein (pyp).